The chain runs to 95 residues: Aspartyl/glutamyl-tRNA(Asn/Gln) amidotransferase subunit C (95 aa).

It belongs to the GatC family. In terms of assembly, heterotrimer of A, B and C subunits.

It catalyses the reaction L-glutamyl-tRNA(Gln) + L-glutamine + ATP + H2O = L-glutaminyl-tRNA(Gln) + L-glutamate + ADP + phosphate + H(+). It carries out the reaction L-aspartyl-tRNA(Asn) + L-glutamine + ATP + H2O = L-asparaginyl-tRNA(Asn) + L-glutamate + ADP + phosphate + 2 H(+). In terms of biological role, allows the formation of correctly charged Asn-tRNA(Asn) or Gln-tRNA(Gln) through the transamidation of misacylated Asp-tRNA(Asn) or Glu-tRNA(Gln) in organisms which lack either or both of asparaginyl-tRNA or glutaminyl-tRNA synthetases. The reaction takes place in the presence of glutamine and ATP through an activated phospho-Asp-tRNA(Asn) or phospho-Glu-tRNA(Gln). The sequence is that of Aspartyl/glutamyl-tRNA(Asn/Gln) amidotransferase subunit C from Pseudomonas syringae pv. syringae (strain B728a).